The primary structure comprises 271 residues: TIP41-like protein (271 aa).

Lysine 106 is subject to N6-acetyllysine. Positions arginine 173–glutamate 271 are interaction with PPP2CA. 2 positions are modified to phosphoserine: serine 265 and serine 270.

This sequence belongs to the TIP41 family. Interacts with PPP2CA. Interacts with PPP2CB, PPP4C and PPP6C. Interacts with IGBP1; the interaction is dependent on PPP2CA. Associates with a protein phosphatase 2A PP2A(C):IGBP1 complex. Interacts with PPP4C and PPP4R2.

It localises to the cytoplasm. Its function is as follows. May be a allosteric regulator of serine/threonine-protein phosphatase 2A (PP2A). Inhibits catalytic activity of the PP2A(D) core complex in vitro. The PP2A(C):TIPRL complex does not show phosphatase activity. Acts as a negative regulator of serine/threonine-protein phosphatase 4 probably by inhibiting the formation of the active PPP4C:PPP4R2 complex; the function is proposed to implicate it in DNA damage response by promoting H2AX phosphorylated on Ser-140 (gamma-H2AX). May play a role in the regulation of ATM/ATR signaling pathway controlling DNA replication and repair. The protein is TIP41-like protein (Tiprl) of Rattus norvegicus (Rat).